Reading from the N-terminus, the 635-residue chain is CCR4-NOT transcription complex subunit 10 (635 aa).

The residue at position 45 (Thr-45) is a Phosphothreonine. The stretch at 131–165 (LVARLEALEKAMAALVATLQLQLLLATNQLNRAEA) forms a coiled coil. 2 disordered regions span residues 396 to 416 (EERQSQSETPSTKPYAPQSAG) and 450 to 474 (SEDVEAPEPKDPTQESWRHPQDNNF). Residues 456 to 470 (PEPKDPTQESWRHPQ) show a composition bias toward basic and acidic residues.

It belongs to the CNOT10 family. In terms of assembly, component of the CCR4-NOT complex. CNOT10 and CNOT11 form a subcomplex docked to the CNOT1 scaffold.

It localises to the cytoplasm. It is found in the nucleus. In terms of biological role, component of the CCR4-NOT complex which is one of the major cellular mRNA deadenylases and is linked to various cellular processes including bulk mRNA degradation, miRNA-mediated repression, translational repression during translational initiation and general transcription regulation. Additional complex functions may be a consequence of its influence on mRNA expression. Is not required for association of CNOT7 to the CCR4-NOT complex. The sequence is that of CCR4-NOT transcription complex subunit 10 (Not10) from Drosophila melanogaster (Fruit fly).